The primary structure comprises 477 residues: UDP-N-acetylmuramoylalanine--D-glutamate ligase (477 aa).

Position 127-133 (Gly127–Thr133) interacts with ATP.

It belongs to the MurCDEF family.

It localises to the cytoplasm. The enzyme catalyses UDP-N-acetyl-alpha-D-muramoyl-L-alanine + D-glutamate + ATP = UDP-N-acetyl-alpha-D-muramoyl-L-alanyl-D-glutamate + ADP + phosphate + H(+). It functions in the pathway cell wall biogenesis; peptidoglycan biosynthesis. Its function is as follows. Cell wall formation. Catalyzes the addition of glutamate to the nucleotide precursor UDP-N-acetylmuramoyl-L-alanine (UMA). This chain is UDP-N-acetylmuramoylalanine--D-glutamate ligase, found in Prochlorococcus marinus (strain MIT 9515).